Consider the following 227-residue polypeptide: Cytochrome c oxidase subunit 2 (227 aa).

Over 1–14 (MAYPFQLGLQDATS) the chain is Mitochondrial intermembrane. A helical membrane pass occupies residues 15–45 (PIMEELTNFHDHTLMIVFLISSLVLYIISSM). Topologically, residues 46 to 59 (LATKMTHTSTMDAQ) are mitochondrial matrix. Residues 60–87 (SMETIWTILPAVILVLIALPSLRILYMM) traverse the membrane as a helical segment. Topologically, residues 88-227 (DEINNPVLTV…FFENWSASMI (140 aa)) are mitochondrial intermembrane. Cu cation contacts are provided by His-161, Cys-196, Glu-198, Cys-200, His-204, and Met-207. Glu-198 contributes to the Mg(2+) binding site.

The protein belongs to the cytochrome c oxidase subunit 2 family. In terms of assembly, component of the cytochrome c oxidase (complex IV, CIV), a multisubunit enzyme composed of 14 subunits. The complex is composed of a catalytic core of 3 subunits MT-CO1, MT-CO2 and MT-CO3, encoded in the mitochondrial DNA, and 11 supernumerary subunits COX4I, COX5A, COX5B, COX6A, COX6B, COX6C, COX7A, COX7B, COX7C, COX8 and NDUFA4, which are encoded in the nuclear genome. The complex exists as a monomer or a dimer and forms supercomplexes (SCs) in the inner mitochondrial membrane with NADH-ubiquinone oxidoreductase (complex I, CI) and ubiquinol-cytochrome c oxidoreductase (cytochrome b-c1 complex, complex III, CIII), resulting in different assemblies (supercomplex SCI(1)III(2)IV(1) and megacomplex MCI(2)III(2)IV(2)). Found in a complex with TMEM177, COA6, COX18, COX20, SCO1 and SCO2. Interacts with TMEM177 in a COX20-dependent manner. Interacts with COX20. Interacts with COX16. It depends on Cu cation as a cofactor.

It is found in the mitochondrion inner membrane. It catalyses the reaction 4 Fe(II)-[cytochrome c] + O2 + 8 H(+)(in) = 4 Fe(III)-[cytochrome c] + 2 H2O + 4 H(+)(out). Functionally, component of the cytochrome c oxidase, the last enzyme in the mitochondrial electron transport chain which drives oxidative phosphorylation. The respiratory chain contains 3 multisubunit complexes succinate dehydrogenase (complex II, CII), ubiquinol-cytochrome c oxidoreductase (cytochrome b-c1 complex, complex III, CIII) and cytochrome c oxidase (complex IV, CIV), that cooperate to transfer electrons derived from NADH and succinate to molecular oxygen, creating an electrochemical gradient over the inner membrane that drives transmembrane transport and the ATP synthase. Cytochrome c oxidase is the component of the respiratory chain that catalyzes the reduction of oxygen to water. Electrons originating from reduced cytochrome c in the intermembrane space (IMS) are transferred via the dinuclear copper A center (CU(A)) of subunit 2 and heme A of subunit 1 to the active site in subunit 1, a binuclear center (BNC) formed by heme A3 and copper B (CU(B)). The BNC reduces molecular oxygen to 2 water molecules using 4 electrons from cytochrome c in the IMS and 4 protons from the mitochondrial matrix. This is Cytochrome c oxidase subunit 2 (MT-CO2) from Acomys wilsoni (Wilson's spiny mouse).